The sequence spans 85 residues: Large ribosomal subunit protein bL27 (85 aa).

This sequence belongs to the bacterial ribosomal protein bL27 family.

The chain is Large ribosomal subunit protein bL27 from Cellvibrio japonicus (strain Ueda107) (Pseudomonas fluorescens subsp. cellulosa).